The primary structure comprises 283 residues: tRNA dimethylallyltransferase (283 aa).

The interval 5–8 is interaction with substrate tRNA; that stretch reads DSML.

This sequence belongs to the IPP transferase family. As to quaternary structure, monomer. Mg(2+) is required as a cofactor.

The catalysed reaction is adenosine(37) in tRNA + dimethylallyl diphosphate = N(6)-dimethylallyladenosine(37) in tRNA + diphosphate. Functionally, catalyzes the transfer of a dimethylallyl group onto the adenine at position 37 in tRNAs that read codons beginning with uridine, leading to the formation of N6-(dimethylallyl)adenosine (i(6)A). The sequence is that of tRNA dimethylallyltransferase from Desulforamulus reducens (strain ATCC BAA-1160 / DSM 100696 / MI-1) (Desulfotomaculum reducens).